The following is a 540-amino-acid chain: Putative actin-fragmin kinase DDB_G0287957 (540 aa).

Residues 27-68 (KNENLNIKNEILNNNNNNNNNKNNNNNNNNNNNIENNSKNEN) adopt a coiled-coil conformation. Disordered stretches follow at residues 37–70 (ILNN…ENFN) and 317–341 (NNNN…INNC).

This sequence belongs to the protein kinase superfamily. AFK Ser/Thr protein kinase family.

This chain is Putative actin-fragmin kinase DDB_G0287957, found in Dictyostelium discoideum (Social amoeba).